The following is a 513-amino-acid chain: Zinc finger protein 395 (513 aa).

A compositionally biased stretch (low complexity) spans alanine 17–serine 29. The segment at alanine 17–glutamate 56 is disordered. The span at proline 45–glutamine 55 shows a compositional bias: polar residues. A Nuclear export signal motif is present at residues methionine 165–leucine 174. A disordered region spans residues lysine 204–proline 269. Residues isoleucine 209–threonine 229 are compositionally biased toward low complexity. A Phosphoserine modification is found at serine 248. The C2H2-type zinc finger occupies tyrosine 280–histidine 305. The disordered stretch occupies residues alanine 335–serine 394. A compositionally biased stretch (polar residues) spans threonine 348–methionine 359. Residues serine 376 and serine 449 each carry the phosphoserine modification. Residues serine 376–glycine 391 show a composition bias toward low complexity.

As to quaternary structure, interacts with repression-mediating E2 binding site P2 of human papillomavirus type 8 (HPV8). As to expression, widely expressed.

It localises to the cytoplasm. It is found in the nucleus. In terms of biological role, plays a role in papillomavirus genes transcription. This is Zinc finger protein 395 (ZNF395) from Homo sapiens (Human).